The primary structure comprises 366 residues: Pectinesterase A (366 aa).

The signal sequence occupies residues 1–24; sequence MLKTISGTLALSLIIAASVHQAQA. Positions 109 and 153 each coordinate substrate. Asp178 (proton donor) is an active-site residue. Cys192 and Cys212 are disulfide-bonded. Asp199 functions as the Nucleophile in the catalytic mechanism. Substrate-binding residues include Arg219, Asn226, Tyr230, Arg267, Trp269, and Thr272.

Belongs to the pectinesterase family. Monomer.

The protein localises to the secreted. The enzyme catalyses [(1-&gt;4)-alpha-D-galacturonosyl methyl ester](n) + n H2O = [(1-&gt;4)-alpha-D-galacturonosyl](n) + n methanol + n H(+). The protein operates within glycan metabolism; pectin degradation; 2-dehydro-3-deoxy-D-gluconate from pectin: step 1/5. Functionally, involved in maceration and soft-rotting of plant tissue. The chain is Pectinesterase A (pemA) from Dickeya chrysanthemi (Pectobacterium chrysanthemi).